Here is a 555-residue protein sequence, read N- to C-terminus: Urocanate hydratase (555 aa).

NAD(+)-binding positions include 51–52 (GG), Gln129, 175–177 (GMG), Glu195, 262–266 (QTSAH), 272–273 (YL), and Tyr321. Cys409 is a catalytic residue. Gly491 is an NAD(+) binding site.

It belongs to the urocanase family. The cofactor is NAD(+).

Its subcellular location is the cytoplasm. It carries out the reaction 4-imidazolone-5-propanoate = trans-urocanate + H2O. The protein operates within amino-acid degradation; L-histidine degradation into L-glutamate; N-formimidoyl-L-glutamate from L-histidine: step 2/3. Catalyzes the conversion of urocanate to 4-imidazolone-5-propionate. In Stenotrophomonas maltophilia (strain R551-3), this protein is Urocanate hydratase.